A 4903-amino-acid polypeptide reads, in one-letter code: Histone-lysine N-methyltransferase 2C (4903 aa).

Disordered regions lie at residues 1–116 and 159–202; these read MSSE…SEES and LTLP…PPQQ. The span at 13–28 shows a compositional bias: pro residues; it reads QPPPAPPEEPGAPAPS. Ser28 and Ser46 each carry phosphoserine. The segment at residues 34–46 is a DNA-binding region (a.T hook); the sequence is KRPRGRPRKDGAS. The span at 50–59 shows a compositional bias: basic residues; sequence RARKKPRSRG. The segment covering 64-81 has biased composition (acidic residues); the sequence is EDEDSMDGLETTETENIV. Phosphoserine is present on residues Ser89 and Ser113. Positions 101–116 are enriched in polar residues; sequence SKQPVSALQRSVSEES. The segment at 226–261 adopts a C2HC pre-PHD-type 1; degenerate zinc-finger fold; that stretch reads ELSLVGLPDAIDVQALFDSTGTCWAHHRCVEWSLGI. PHD-type zinc fingers lie at residues 282-330, 340-390, 387-437, and 463-519; these read ERCA…PEHI, DANC…CKVC, CKVC…CRIC, and DNLC…CKHL. The RING-type zinc-finger motif lies at 343 to 388; the sequence is CAVCDSPGDLLDQFFCTTCGQHYHGMCLDIAVTPLKRAGWQCPECK. The region spanning 435-488 is the DHHC domain; it reads RICIECGTRSSTQWHHNCLICDTCYQQQDNLCPFCGKCYHPELQKDMLHCNMCK. The interval 671–703 is disordered; it reads SEVASKELSPPKSAPETAAPEALLSPHSERSLS. Lys751 carries the post-translational modification N6-acetyllysine. Residues 824-835 are compositionally biased toward basic residues; it reads TKRKFSPGRPRS. Disordered regions lie at residues 824–857 and 882–904; these read TKRK…DTSE and GFPG…GRSK. Polar residues predominate over residues 838–848; that stretch reads GAWSNHNTVSP. Ser847 carries the post-translational modification Phosphoserine. 3 consecutive PHD-type zinc fingers follow at residues 950 to 1003, 1000 to 1050, and 1077 to 1132; these read QDMC…CTVC, CTVC…CVWC, and LSSC…CRPY. The disordered stretch occupies residues 1208-1318; that stretch reads AVLQTPPDIQ…PSRDDGWREQ (111 aa). Over residues 1217 to 1263 the composition is skewed to basic and acidic residues; it reads QSEHSRDGEMDDSREGELMDCDGKSESSPEREAGDDETKGIEGTDAI. Ser1294 is subject to Phosphoserine. Residues 1309 to 1318 show a composition bias toward basic and acidic residues; sequence PSRDDGWREQ. Residues 1330-1352 adopt a coiled-coil conformation; the sequence is VAENTDKIKKRYRKRKNKLEETF. Disordered regions lie at residues 1397–1419 and 1447–1473; these read SDPL…ADDP and HSDI…RPLT. Polar residues-rich tracts occupy residues 1406-1415 and 1455-1471; these read TSAKPGTQGT and ADAS…SSRP. At Lys1497 the chain carries N6-acetyllysine. Disordered stretches follow at residues 1594–1617 and 1698–1757; these read NAIA…ENDT and VQMS…AKIE. Over residues 1599-1617 the composition is skewed to polar residues; the sequence is DPNSSWAPTTPSMEGENDT. A compositionally biased stretch (low complexity) spans 1707–1717; it reads RQQQQDSIDPS. Positions 1718-1742 are enriched in basic and acidic residues; sequence SRIDSDLFKDPLKQRESEHEQEWKF. Residues 1743 to 1790 are a coiled coil; it reads RQQMRQKSKQQAKIEATQKLEQVKNEQQQQQQQQQQQQQQQLASQHLL. Lys1761 is modified (N6-acetyllysine). The disordered stretch occupies residues 1791–2375; it reads VAPGSDTPSS…MSQADTEKLR (585 aa). Residues 1796-1819 are compositionally biased toward polar residues; it reads DTPSSGAQSPLTPQAGNGNVSPAQ. Residues 1855-1886 show a composition bias toward low complexity; the sequence is PSRIPVQESLSQSQNSQPPSPQMFSPGSSHSR. Ser1983 is modified (phosphoserine). A compositionally biased stretch (polar residues) spans 1986-2001; it reads ISEQSTKGPLTTGTSD. Position 2005 is an N6-acetyllysine (Lys2005). Composition is skewed to polar residues over residues 2113–2124, 2137–2151, and 2325–2334; these read GTISRSASQDPY, SYSQ…NPDP, and GNFSTSSNLP. Positions 2335 to 2347 are enriched in low complexity; it reads VSSQGQQFSSVSQ. Positions 2355-2369 are enriched in polar residues; sequence SGGTDTQNTVNMSQA. 2 positions are modified to asymmetric dimethylarginine: Arg2447 and Arg2563. Disordered stretches follow at residues 2561–2668, 2702–2736, and 2786–2844; these read RSRL…DNLE, KDLD…NDPN, and VEPK…GDAD. 3 stretches are compositionally biased toward polar residues: residues 2602 to 2611, 2621 to 2636, and 2653 to 2668; these read QPSQCLSNQL, PPSQ…QSSI, and PLST…DNLE. Over residues 2788–2807 the composition is skewed to basic and acidic residues; that stretch reads PKTRDQGDKTMVLEDKDLPQ. 2 positions are modified to N6-acetyllysine: Lys2796 and Lys2803. A Phosphoserine modification is found at Ser2822. Position 2824 is a phosphotyrosine (Tyr2824). Over residues 2825–2843 the composition is skewed to basic and acidic residues; it reads SKEEIQSEIKNHDDSRGDA. Lys2826 and Lys2862 each carry N6-acetyllysine. Positions 2920 to 2953 are disordered; the sequence is EKCDDSDIRPSGSSPPSLPISPSTHGSSLPPTLI. The span at 2929-2942 shows a compositional bias: low complexity; the sequence is PSGSSPPSLPISPS. 2 coiled-coil regions span residues 3047–3074 and 3166–3193; these read LLQD…QRSE and NDSQ…YLEE. The segment covering 3198 to 3214 has biased composition (basic residues); the sequence is HRKSKKALSAKQRTAKK. Positions 3198-3223 are disordered; it reads HRKSKKALSAKQRTAKKAGREFPEED. Coiled-coil stretches lie at residues 3224–3270 and 3387–3432; these read AEQL…QQCA and FSES…QHCL. Disordered regions lie at residues 3329–3407 and 3444–3910; these read PGWQ…QERQ and SQMP…QKMA. Residues 3391–3407 are compositionally biased toward basic and acidic residues; the sequence is FQERERKERLREQQERQ. Over residues 3464–3485 the composition is skewed to low complexity; it reads LQQSPQHQQQIGPVLQQQNVQQ. Polar residues-rich tracts occupy residues 3486 to 3503, 3515 to 3524, 3557 to 3586, and 3632 to 3647; these read GSVN…NEQR, PSASGGSPNF, PVAN…SLIQ, and LSET…PSEL. Basic and acidic residues-rich tracts occupy residues 3697–3739 and 3795–3804; these read AEAD…KIKD and SSTKDGKLIE. Lys3709 is subject to N6-acetyllysine. Over residues 3871–3885 the composition is skewed to polar residues; that stretch reads MYSSSDSFTHLKQQN. A compositionally biased stretch (pro residues) spans 3890–3904; the sequence is PPTPPASLPPTPPPM. At Ser4027 the chain carries Phosphoserine. Arg4132 is modified (asymmetric dimethylarginine). Positions 4159-4184 are disordered; the sequence is PNVPFPPTSNGLSGYKDSSHGPAEGA. Ser4260 bears the Phosphoserine mark. A C2HC pre-PHD-type 2 zinc finger spans residues 4391 to 4431; that stretch reads CRKCCFCHEEGDGLTDGPARLLNLDLDLWVHLNCALWSTEV. The segment at 4452 to 4499 adopts a PHD-type 8 zinc-finger fold; sequence MKCVFCHKTGATSGCHRFRCTNIYHFTCATKAQCMFFKDKTMLCPMHK. Positions 4537–4597 constitute an FYR N-terminal domain; sequence DHTFRVGSLI…CRYLCSIEEK (61 aa). The 86-residue stretch at 4598–4683 folds into the FYR C-terminal domain; it reads DGRPVFVIRI…EACENYTFRY (86 aa). Residues 4699–4704 carry the WDR5 interaction motif (WIN) motif; the sequence is GCARSE. Residues 4763–4879 form the SET domain; sequence SNVYLARSRI…KGEELCYDYK (117 aa). Residues Tyr4817 and 4840 to 4841 contribute to the S-adenosyl-L-methionine site; that span reads NH. 4 residues coordinate Zn(2+): Cys4843, Cys4891, Cys4893, and Cys4898. The Post-SET domain maps to 4887 to 4903; that stretch reads HKIPCHCGAVNCRKWMN.

This sequence belongs to the class V-like SAM-binding methyltransferase superfamily. Histone-lysine methyltransferase family. TRX/MLL subfamily. In terms of assembly, component of the MLL3 complex (also named ASCOM complex), at least composed of catalytic subunit KMT2C/MLL3, ASH2L, RBBP5, WDR5, NCOA6, DPY30, KDM6A, PAXIP1/PTIP, PAGR1 and alpha- and beta-tubulin. Forms a core complex with the evolutionary conserved subcomplex WRAD composed of WDR5, RBBP5, ASH2L/ASH2 and DPY30 subunits; WRAD differentially stimulates the methyltransferase activity. Interacts (via WIN motif) with WDR5. In terms of tissue distribution, in adult, detected in testis, kidney, spleen and lung, weakly expressed in brain and absent in heart and liver. First detected throughout the embryo at 8 dpc when expression is strong in forebrain neuroepithelium and absent in heart. Expressed in the eye lens between 10 and 14.5 dpc. By 13 dpc, expressed strongly in spinal cord, hand/foot plates and gonads.

The protein localises to the nucleus. The enzyme catalyses L-lysyl(4)-[histone H3] + S-adenosyl-L-methionine = N(6)-methyl-L-lysyl(4)-[histone H3] + S-adenosyl-L-homocysteine + H(+). Histone methyltransferase that catalyzes methyl group transfer from S-adenosyl-L-methionine to the epsilon-amino group of 'Lys-4' of histone H3 (H3K4). Part of chromatin remodeling machinery predominantly forms H3K4me1 methylation marks at active chromatin sites where transcription and DNA repair take place. Likely plays a redundant role with KMT2D in enriching H3K4me1 mark on primed and active enhancer elements. This Mus musculus (Mouse) protein is Histone-lysine N-methyltransferase 2C (Kmt2c).